Consider the following 279-residue polypeptide: Thioredoxin domain-containing protein plp1 (279 aa).

Over residues 56 to 70 (RKEDTQDYNEPELHN) the composition is skewed to basic and acidic residues. The tract at residues 56–75 (RKEDTQDYNEPELHNSNDPT) is disordered. Positions 137–248 (FLTVENEREV…LEFRLLKSSA (112 aa)) constitute a Thioredoxin domain. Over residues 254–267 (EESSSNKSIYHDEL) the composition is skewed to basic and acidic residues. The tract at residues 254-279 (EESSSNKSIYHDELQNNQSDDSDFFE) is disordered. Phosphoserine is present on residues serine 272 and serine 275.

It belongs to the phosducin family.

Its subcellular location is the cytoplasm. The protein localises to the nucleus. Its function is as follows. Inhibits early G-protein signaling events following pheromone stimulation. May help create heterodimerizable beta-tubulin by facilitating the efficient transfer of nascent beta-tubulin polypeptides to the folding apparatus. The polypeptide is Thioredoxin domain-containing protein plp1 (plp1) (Schizosaccharomyces pombe (strain 972 / ATCC 24843) (Fission yeast)).